We begin with the raw amino-acid sequence, 364 residues long: Phosphoserine aminotransferase (364 aa).

L-glutamate is bound at residue Arg46. Pyridoxal 5'-phosphate-binding positions include 80-81, Trp106, Thr157, Asp176, and Gln199; that span reads AR. Position 200 is an N6-(pyridoxal phosphate)lysine (Lys200). Residue 241 to 242 participates in pyridoxal 5'-phosphate binding; sequence NT.

It belongs to the class-V pyridoxal-phosphate-dependent aminotransferase family. SerC subfamily. As to quaternary structure, homodimer. Pyridoxal 5'-phosphate is required as a cofactor.

It is found in the cytoplasm. The catalysed reaction is O-phospho-L-serine + 2-oxoglutarate = 3-phosphooxypyruvate + L-glutamate. It carries out the reaction 4-(phosphooxy)-L-threonine + 2-oxoglutarate = (R)-3-hydroxy-2-oxo-4-phosphooxybutanoate + L-glutamate. Its pathway is amino-acid biosynthesis; L-serine biosynthesis; L-serine from 3-phospho-D-glycerate: step 2/3. The protein operates within cofactor biosynthesis; pyridoxine 5'-phosphate biosynthesis; pyridoxine 5'-phosphate from D-erythrose 4-phosphate: step 3/5. In terms of biological role, catalyzes the reversible conversion of 3-phosphohydroxypyruvate to phosphoserine and of 3-hydroxy-2-oxo-4-phosphonooxybutanoate to phosphohydroxythreonine. The polypeptide is Phosphoserine aminotransferase (Vibrio cholerae serotype O1 (strain ATCC 39315 / El Tor Inaba N16961)).